A 108-amino-acid chain; its full sequence is UPF0235 protein APE_0182.1 (108 aa).

This sequence belongs to the UPF0235 family.

The chain is UPF0235 protein APE_0182.1 from Aeropyrum pernix (strain ATCC 700893 / DSM 11879 / JCM 9820 / NBRC 100138 / K1).